The primary structure comprises 320 residues: Ferrochelatase (320 aa).

Positions 194 and 275 each coordinate Fe cation.

It belongs to the ferrochelatase family.

It is found in the cytoplasm. The catalysed reaction is heme b + 2 H(+) = protoporphyrin IX + Fe(2+). The protein operates within porphyrin-containing compound metabolism; protoheme biosynthesis; protoheme from protoporphyrin-IX: step 1/1. Functionally, catalyzes the ferrous insertion into protoporphyrin IX. The chain is Ferrochelatase from Cronobacter sakazakii (strain ATCC BAA-894) (Enterobacter sakazakii).